A 415-amino-acid chain; its full sequence is MPTWTEHIFYKKTGRIPSPGDVVEVAPDLVGFHDLTGYHVLEVLEHMGKVEVFDNEKVVVAFDHLSPPPNQRAAEIMVYIRRHVKSLGLPHFFDVGGGILHQIILERYAMPGQVIFTADSHGNTAGAVGAFAHGMGATDIAAALKLGKTWLVVPAPFKVEVRGEFPPGVMGKDVALHLLGQFGAEGFNGYSVEVFVERPKVFPMDDRATVGNMSTEMGADALMFIPDAVTAEYLKTARGVDYTPPSLEPGNYADKYTVELGRLEPLVAAPHSVDNVKTVREVEGVEVDQVFIGSCTNGRLRDIATAARILKGRRVKTRCIAIPASYEVFKTAMKLGYIDVLTEAGCVVTYGTCGPCLGGHFGVAGPGEVHLTTSNRNFKGRVGHPEAKIYLANPAVAAATAAEGRIADPRPYLKH.

3 residues coordinate [4Fe-4S] cluster: cysteine 295, cysteine 353, and cysteine 356.

The protein belongs to the aconitase/IPM isomerase family. LeuC type 2 subfamily. Heterodimer of LeuC and LeuD. Requires [4Fe-4S] cluster as cofactor.

The enzyme catalyses (2R,3S)-3-isopropylmalate = (2S)-2-isopropylmalate. Its pathway is amino-acid biosynthesis; L-leucine biosynthesis; L-leucine from 3-methyl-2-oxobutanoate: step 2/4. Its function is as follows. Catalyzes the isomerization between 2-isopropylmalate and 3-isopropylmalate, via the formation of 2-isopropylmaleate. This is 3-isopropylmalate dehydratase large subunit from Pyrobaculum arsenaticum (strain DSM 13514 / JCM 11321 / PZ6).